Consider the following 297-residue polypeptide: HTH-type transcriptional regulator PerR (297 aa).

One can recognise an HTH lysR-type domain in the interval 7 to 64 (APLNLLRAFEAAGRTGAFALAASELELSPSAISHAIRKLENLLDVRLFQRSTREITLT). A DNA-binding region (H-T-H motif) is located at residues 24–44 (FALAASELELSPSAISHAIRK).

It belongs to the LysR transcriptional regulatory family.

Apparent regulatory gene involved in peroxide resistance in stationary phase. The chain is HTH-type transcriptional regulator PerR (perR) from Escherichia coli (strain K12).